We begin with the raw amino-acid sequence, 339 residues long: NADPH dehydrogenase (339 aa).

24–27 is an FMN binding site; it reads SPMC. Tyr-29 provides a ligand contact to substrate. 2 residues coordinate FMN: Ala-61 and Gln-103. 165 to 168 contributes to the substrate binding site; sequence HGAH. FMN is bound by residues Arg-216 and 308 to 309; that span reads AR.

Belongs to the NADH:flavin oxidoreductase/NADH oxidase family. NamA subfamily. Homotetramer. It depends on FMN as a cofactor.

It carries out the reaction A + NADPH + H(+) = AH2 + NADP(+). Its function is as follows. Catalyzes the reduction of the double bond of an array of alpha,beta-unsaturated aldehydes and ketones. It also reduces the nitro group of nitroester and nitroaromatic compounds. It could have a role in detoxification processes. The protein is NADPH dehydrogenase of Bacillus licheniformis (strain ATCC 14580 / DSM 13 / JCM 2505 / CCUG 7422 / NBRC 12200 / NCIMB 9375 / NCTC 10341 / NRRL NRS-1264 / Gibson 46).